Here is a 236-residue protein sequence, read N- to C-terminus: Probable 6-phosphogluconolactonase (236 aa).

The protein belongs to the glucosamine/galactosamine-6-phosphate isomerase family. 6-phosphogluconolactonase subfamily.

It carries out the reaction 6-phospho-D-glucono-1,5-lactone + H2O = 6-phospho-D-gluconate + H(+). It participates in carbohydrate degradation; pentose phosphate pathway; D-ribulose 5-phosphate from D-glucose 6-phosphate (oxidative stage): step 2/3. Its function is as follows. Hydrolysis of 6-phosphogluconolactone to 6-phosphogluconate. In Dictyostelium discoideum (Social amoeba), this protein is Probable 6-phosphogluconolactonase (pgl).